A 375-amino-acid polypeptide reads, in one-letter code: Histidine biosynthesis bifunctional protein HisB (375 aa).

Residues 1-168 (MTPILFVDRD…GIAHELADAP (168 aa)) are histidinol-phosphatase. Aspartate 8 serves as the catalytic Nucleophile. Mg(2+)-binding residues include aspartate 8, aspartate 10, and aspartate 128. The Proton donor role is filled by aspartate 10. Residues 169-375 (RRAVVQRNTK…TALPTTKGAL (207 aa)) form an imidazoleglycerol-phosphate dehydratase region.

It in the N-terminal section; belongs to the histidinol-phosphatase family. The protein in the C-terminal section; belongs to the imidazoleglycerol-phosphate dehydratase family. Mg(2+) serves as cofactor.

Its subcellular location is the cytoplasm. The catalysed reaction is D-erythro-1-(imidazol-4-yl)glycerol 3-phosphate = 3-(imidazol-4-yl)-2-oxopropyl phosphate + H2O. The enzyme catalyses L-histidinol phosphate + H2O = L-histidinol + phosphate. Its pathway is amino-acid biosynthesis; L-histidine biosynthesis; L-histidine from 5-phospho-alpha-D-ribose 1-diphosphate: step 6/9. The protein operates within amino-acid biosynthesis; L-histidine biosynthesis; L-histidine from 5-phospho-alpha-D-ribose 1-diphosphate: step 8/9. The chain is Histidine biosynthesis bifunctional protein HisB from Xanthomonas euvesicatoria pv. vesicatoria (strain 85-10) (Xanthomonas campestris pv. vesicatoria).